The sequence spans 86 residues: uncharacterized protein (86 aa).

The chain crosses the membrane as a helical span at residues 12–32 (IIFIFAIIIIVVLCVITYLYL).

Its subcellular location is the membrane. This is an uncharacterized protein from Escherichia coli (strain K12).